Here is an 838-residue protein sequence, read N- to C-terminus: DNA gyrase subunit A (838 aa).

The Topo IIA-type catalytic domain occupies 41 to 510; that stretch reads LPEVRDGLKP…ADGDVSDEDL (470 aa). Tyr129 acts as the O-(5'-phospho-DNA)-tyrosine intermediate in catalysis. Residues 537–543 carry the GyrA-box motif; it reads QKRGGKG.

It belongs to the type II topoisomerase GyrA/ParC subunit family. As to quaternary structure, heterotetramer, composed of two GyrA and two GyrB chains. In the heterotetramer, GyrA contains the active site tyrosine that forms a transient covalent intermediate with DNA, while GyrB binds cofactors and catalyzes ATP hydrolysis. Mg(2+) serves as cofactor.

It is found in the cytoplasm. It catalyses the reaction ATP-dependent breakage, passage and rejoining of double-stranded DNA.. DNA supercoiling is inhibited by EDTA, novobiocin, coumermycin and ciprofloxacin. Its function is as follows. A type II topoisomerase that negatively supercoils closed circular double-stranded (ds) DNA in an ATP-dependent manner to modulate DNA topology and maintain chromosomes in an underwound state. Also catalyzes the interconversion of other topological isomers of double-stranded DNA rings, including catenanes and knotted rings. Relaxes negatively supercoiled DNA in an ATP-independent manner. A linear reaction intermediate can be trapped in the presence of the antibiotic ciprofloxacin. Negative supercoiling favors strand separation, and DNA replication, transcription, recombination and repair, all of which involve strand separation. Type II topoisomerases break and join 2 DNA strands simultaneously in an ATP-dependent manner. This Mycobacterium bovis (strain BCG / Pasteur 1173P2) protein is DNA gyrase subunit A.